Consider the following 587-residue polypeptide: Aspartate--tRNA ligase (587 aa).

Residue Glu174 participates in L-aspartate binding. The tract at residues 198 to 201 (QITK) is aspartate. Arg220 serves as a coordination point for L-aspartate. ATP contacts are provided by residues 220–222 (RDE) and Gln229. Position 443 (His443) interacts with L-aspartate. Position 477 (Glu477) interacts with ATP. An L-aspartate-binding site is contributed by Arg484. Residue 529–532 (GLDR) coordinates ATP.

Belongs to the class-II aminoacyl-tRNA synthetase family. Type 1 subfamily. As to quaternary structure, homodimer.

The protein resides in the cytoplasm. It catalyses the reaction tRNA(Asp) + L-aspartate + ATP = L-aspartyl-tRNA(Asp) + AMP + diphosphate. In terms of biological role, catalyzes the attachment of L-aspartate to tRNA(Asp) in a two-step reaction: L-aspartate is first activated by ATP to form Asp-AMP and then transferred to the acceptor end of tRNA(Asp). The sequence is that of Aspartate--tRNA ligase from Streptococcus pneumoniae serotype 4 (strain ATCC BAA-334 / TIGR4).